The chain runs to 400 residues: Proline-rich protein 5 (400 aa).

The interval 301-358 (TDSTSKLSMAGTKPPGEGERPPISNGQFPPLHNLSDSQQGLYNSQRDSPLLPAPSSSP) is disordered. Polar residues predominate over residues 334 to 347 (LSDSQQGLYNSQRD). The span at 348–358 (SPLLPAPSSSP) shows a compositional bias: low complexity.

Belongs to the PROTOR family. As to quaternary structure, associated component of the mechanistic target of rapamycin complex 2 (mTORC2).

In terms of biological role, associated subunit of mTORC2, which regulates cell growth and survival in response to hormonal signals. This chain is Proline-rich protein 5 (prr5), found in Xenopus laevis (African clawed frog).